The following is a 391-amino-acid chain: Superoxide dismutase [Fe] 1, chloroplastic (391 aa).

A chloroplast-targeting transit peptide spans 1-73; it reads MAFATLVGVG…GESTNSRVLQ (73 aa). Over residues 87–119 the composition is skewed to acidic residues; that stretch reads VNDGIDDETASDAEMDEDAEANGDESSGTDEDA. A disordered region spans residues 87 to 120; it reads VNDGIDDETASDAEMDEDAEANGDESSGTDEDAS. The Fe cation site is built by histidine 148, histidine 202, aspartate 301, and histidine 305. Positions 370–391 are disordered; it reads MPQQVNGDAREQTSGQEKSLGV. Over residues 381-391 the composition is skewed to polar residues; it reads QTSGQEKSLGV.

It belongs to the iron/manganese superoxide dismutase family. Homodimer. Fe cation serves as cofactor.

The protein localises to the plastid. The protein resides in the chloroplast. The enzyme catalyses 2 superoxide + 2 H(+) = H2O2 + O2. Destroys superoxide anion radicals which are normally produced within the cells and which are toxic to biological systems. The polypeptide is Superoxide dismutase [Fe] 1, chloroplastic (Oryza sativa subsp. japonica (Rice)).